An 802-amino-acid chain; its full sequence is Post-transcriptional regulator mkt1 (802 aa).

3 positions are modified to phosphoserine: Ser227, Ser228, and Ser230.

The protein belongs to the XPG/RAD2 endonuclease family. As to quaternary structure, interacts with pab1 binding protein ath1.

Its function is as follows. Involved in post-transcriptional regulation of gene expression by 3'-UTR-mediated RNA regulation. Promotes interactions between mRNA and poly(A)-binding protein. Binds the 3' UTR of mRNAs, centromeric transcripts and antisense-rDNA. Required for the establishment but not the maintenance of heterochromatin at pericentromeres, and for the maintenance of small domains of facultative heterochromatin known as HOODs. This chain is Post-transcriptional regulator mkt1, found in Schizosaccharomyces pombe (strain 972 / ATCC 24843) (Fission yeast).